The primary structure comprises 369 residues: Opsin Rh6 (369 aa).

Residues 1 to 46 (MASLHPPSFAYMRDGRNLSLAESVPAEIMHMVDPYWYQWPPLEPMW) are Extracellular-facing. N-linked (GlcNAc...) asparagine glycosylation occurs at Asn-17. The chain crosses the membrane as a helical span at residues 47-71 (FGIIGFVIAILGTMSLAGNFIVMYI). The Cytoplasmic portion of the chain corresponds to 72–83 (FTSSKGLRTPSN). Residues 84–109 (MFVVNLAFSDFMMMFTMFPPVVLNGF) traverse the membrane as a helical segment. The Extracellular portion of the chain corresponds to 110-123 (YGTWIMGPFLCELY). Cys-120 and Cys-197 are joined by a disulfide. A helical membrane pass occupies residues 124-143 (GMFGSLFGCVSIWSMTLIAY). Topologically, residues 144 to 162 (DRYCVIVKGMARKPLTATA) are cytoplasmic. A helical transmembrane segment spans residues 163 to 186 (AVLRLMVVWTICGAWALMPLFGWN). Topologically, residues 187–210 (RYVPEGNMTACGTDYFAKDWWNRS) are extracellular. N-linked (GlcNAc...) asparagine glycans are attached at residues Asn-193 and Asn-208. The chain crosses the membrane as a helical span at residues 211–238 (YIIVYSLWVYLTPLLTIIFSYWHIMKAV). Residues 239 to 274 (AAHEKAMREQAKKMNVASLRNSEADKSKAIEIKLAK) lie on the Cytoplasmic side of the membrane. Residues 275–298 (VALTTISLWFFAWTPYTIINYAGI) form a helical membrane-spanning segment. Topologically, residues 299–305 (FESMHLS) are extracellular. Residues 306–330 (PLSTICGSVFAKANAVCNPIVYGLS) form a helical membrane-spanning segment. The residue at position 317 (Lys-317) is an N6-(retinylidene)lysine. Topologically, residues 331-369 (HPKYKQVLREKMPCLACGKDDLTSDSRTQATAEISESQA) are cytoplasmic.

Belongs to the G-protein coupled receptor 1 family. Opsin subfamily. In terms of processing, phosphorylated on some or all of the serine and threonine residues present in the C-terminal region. In terms of tissue distribution, each Drosophila eye is composed of 800 facets or ommatidia. Each ommatidium contains 8 photoreceptor cells (R1-R8), the R1 to R6 cells are outer cells, while R7 and R8 are inner cells. Rh6 is expressed in a subset of R8 cells, most likely expressed in the subset of R8 cells paired with Rh4-expressing R7 cells (R7y).

Its subcellular location is the membrane. In terms of biological role, visual pigments are the light-absorbing molecules that mediate vision. They consist of an apoprotein, opsin, covalently linked to cis-retinal. This chain is Opsin Rh6 (Rh6), found in Drosophila melanogaster (Fruit fly).